A 404-amino-acid polypeptide reads, in one-letter code: Mitochondrial potassium channel (404 aa).

A mitochondrion-targeting transit peptide spans 1 to 30; that stretch reads MTGRSRVLAMRHVGGVSPVLVRRDLFLTRT. The Mitochondrial matrix portion of the chain corresponds to 31–196; it reads LCSHGPSQPR…KERTRAERTK (166 aa). S65 carries the phosphoserine modification. The stretch at 111-138 forms a coiled coil; it reads VREAREDLESQQTKLKEVRDRLDRISRD. Residues 197–217 traverse the membrane as a helical segment; that stretch reads NWSLIGSVLGALIGVAGSTYV. Residues 218–380 are Mitochondrial intermembrane-facing; the sequence is NRVRLQELKA…LEAQVNRNTV (163 aa). A helical membrane pass occupies residues 381–401; it reads YGTLVTCATFVAVLPVLYMLF. At 402 to 404 the chain is on the mitochondrial matrix side; the sequence is RAS.

As to quaternary structure, the mitochondrial potassium channel (mitoK(ATP)) forms a heteromultimer.

The protein localises to the mitochondrion inner membrane. It catalyses the reaction K(+)(in) = K(+)(out). Its activity is regulated as follows. Channel activity inhibited by ATP via ABCB8/MITOSUR subunit. In terms of biological role, pore-forming subunit of the mitochondrial ATP-gated potassium channel (mitoK(ATP)). Together with ATP-binding subunit ABCB8/MITOSUR of the mitoK(ATP) channel, mediates ATP-dependent K(+) currents across the mitochondrial inner membrane. An increase in ATP intracellular levels closes the channel, inhibiting K(+) transport, whereas a decrease in ATP levels enhances K(+) uptake in the mitochondrial matrix. May contribute to the homeostatic control of cellular metabolism under stress conditions by regulating the mitochondrial matrix volume. This is Mitochondrial potassium channel from Bos taurus (Bovine).